Here is a 139-residue protein sequence, read N- to C-terminus: ATP synthase epsilon chain (139 aa).

The protein belongs to the ATPase epsilon chain family. In terms of assembly, F-type ATPases have 2 components, CF(1) - the catalytic core - and CF(0) - the membrane proton channel. CF(1) has five subunits: alpha(3), beta(3), gamma(1), delta(1), epsilon(1). CF(0) has three main subunits: a, b and c.

The protein localises to the cell inner membrane. Its function is as follows. Produces ATP from ADP in the presence of a proton gradient across the membrane. This is ATP synthase epsilon chain from Erwinia tasmaniensis (strain DSM 17950 / CFBP 7177 / CIP 109463 / NCPPB 4357 / Et1/99).